A 203-amino-acid polypeptide reads, in one-letter code: Protein shisa-like-1a (203 aa).

The N-terminal stretch at M1–S25 is a signal peptide. Over A26–T97 the chain is Extracellular. N53, N63, N72, N83, and N95 each carry an N-linked (GlcNAc...) asparagine glycan. Residues A98–L118 form a helical membrane-spanning segment. Over Y119 to W203 the chain is Cytoplasmic. Residues E157–S191 are disordered. Low complexity predominate over residues G161–L170. A compositionally biased stretch (basic residues) spans H171–S184.

The protein belongs to the shisa family.

The protein resides in the membrane. The sequence is that of Protein shisa-like-1a (shisal1a) from Danio rerio (Zebrafish).